The sequence spans 217 residues: Casparian strip membrane protein 6 (217 aa).

Residues 1–57 (MEEAKHIEAVEAKQIEAEEAQRIKAGEAKQIEAGETSRSSRKVITFEPKLVINKGIS) lie on the Cytoplasmic side of the membrane. The chain crosses the membrane as a helical span at residues 58 to 78 (VLGFVLRLFAVFGTIGSALAM). The Extracellular segment spans residues 79 to 103 (GTTHESVVSLSQLVLLKVKYSDLPT). Residues 104–124 (LMFFVVANAIAGGYLVLSLPV) form a helical membrane-spanning segment. Residues 125–138 (SIFHIFSTKAKTSR) are Cytoplasmic-facing. The chain crosses the membrane as a helical span at residues 139–159 (IILLVIDTVMLALVSSGASAA). At 160 to 191 (TATVYLAHEGNTTANWPPICQQFDGFCERISG) the chain is on the extracellular side. N170 carries N-linked (GlcNAc...) asparagine glycosylation. The chain crosses the membrane as a helical span at residues 192–212 (SLIGSFCAVILLMLIVINSAI). At 213-217 (SLSRH) the chain is on the cytoplasmic side.

It belongs to the Casparian strip membrane proteins (CASP) family. Homodimer and heterodimers.

The protein localises to the cell membrane. Regulates membrane-cell wall junctions and localized cell wall deposition. Required for establishment of the Casparian strip membrane domain (CSD) and the subsequent formation of Casparian strips, a cell wall modification of the root endodermis that determines an apoplastic barrier between the intraorganismal apoplasm and the extraorganismal apoplasm and prevents lateral diffusion. The polypeptide is Casparian strip membrane protein 6 (Arabidopsis lyrata subsp. lyrata (Lyre-leaved rock-cress)).